Consider the following 306-residue polypeptide: Aspartate carbamoyltransferase catalytic subunit (306 aa).

The carbamoyl phosphate site is built by Arg51 and Thr52. L-aspartate is bound at residue Lys80. Carbamoyl phosphate is bound by residues Arg101, His129, and Gln132. Positions 162 and 224 each coordinate L-aspartate. Residues Leu263 and Pro264 each contribute to the carbamoyl phosphate site.

Belongs to the aspartate/ornithine carbamoyltransferase superfamily. ATCase family. As to quaternary structure, heterododecamer (2C3:3R2) of six catalytic PyrB chains organized as two trimers (C3), and six regulatory PyrI chains organized as three dimers (R2).

It catalyses the reaction carbamoyl phosphate + L-aspartate = N-carbamoyl-L-aspartate + phosphate + H(+). Its pathway is pyrimidine metabolism; UMP biosynthesis via de novo pathway; (S)-dihydroorotate from bicarbonate: step 2/3. Functionally, catalyzes the condensation of carbamoyl phosphate and aspartate to form carbamoyl aspartate and inorganic phosphate, the committed step in the de novo pyrimidine nucleotide biosynthesis pathway. The chain is Aspartate carbamoyltransferase catalytic subunit from Parabacteroides distasonis (strain ATCC 8503 / DSM 20701 / CIP 104284 / JCM 5825 / NCTC 11152).